A 206-amino-acid polypeptide reads, in one-letter code: Glycerol-3-phosphate acyltransferase (206 aa).

5 consecutive transmembrane segments (helical) span residues 3-23 (LSLIFILAYLIGSFPSGVIIG), 47-67 (VLGPIAGTAVLFLDILKGTLA), 79-99 (HSLVLVVGLAAVIGHAYSIFL), 119-139 (PLFFVIASTIFISVILITSMV), and 152-172 (ILSFYTHDWLLGTIATLVLIF).

Belongs to the PlsY family. Probably interacts with PlsX.

It localises to the cell membrane. It catalyses the reaction an acyl phosphate + sn-glycerol 3-phosphate = a 1-acyl-sn-glycero-3-phosphate + phosphate. It functions in the pathway lipid metabolism; phospholipid metabolism. Its function is as follows. Catalyzes the transfer of an acyl group from acyl-phosphate (acyl-PO(4)) to glycerol-3-phosphate (G3P) to form lysophosphatidic acid (LPA). This enzyme utilizes acyl-phosphate as fatty acyl donor, but not acyl-CoA or acyl-ACP. This is Glycerol-3-phosphate acyltransferase from Latilactobacillus sakei subsp. sakei (strain 23K) (Lactobacillus sakei subsp. sakei).